Consider the following 118-residue polypeptide: NADH-quinone oxidoreductase subunit A (118 aa).

A run of 3 helical transmembrane segments spans residues 8–28 (ILIF…LNYL), 61–81 (FMYA…YPWA), and 86–106 (VLGL…VLGL).

This sequence belongs to the complex I subunit 3 family. In terms of assembly, NDH-1 is composed of 14 different subunits. Subunits NuoA, H, J, K, L, M, N constitute the membrane sector of the complex.

It localises to the cell membrane. It catalyses the reaction a quinone + NADH + 5 H(+)(in) = a quinol + NAD(+) + 4 H(+)(out). Its function is as follows. NDH-1 shuttles electrons from NADH, via FMN and iron-sulfur (Fe-S) centers, to quinones in the respiratory chain. The immediate electron acceptor for the enzyme in this species is believed to be a menaquinone. Couples the redox reaction to proton translocation (for every two electrons transferred, four hydrogen ions are translocated across the cytoplasmic membrane), and thus conserves the redox energy in a proton gradient. This chain is NADH-quinone oxidoreductase subunit A, found in Carboxydothermus hydrogenoformans (strain ATCC BAA-161 / DSM 6008 / Z-2901).